The sequence spans 147 residues: Ubiquitin-conjugating enzyme E2 D3 (147 aa).

In terms of domain architecture, UBC core spans 1–147; sequence MALKRINKEL…SREWTQKYAM (147 aa). A disulfide bridge links cysteine 21 with cysteine 107. Cysteine 85 (glycyl thioester intermediate) is an active-site residue.

This sequence belongs to the ubiquitin-conjugating enzyme family. In terms of assembly, interacts with SCF (SKP1-CUL1-F-box protein) E3 ubiquitin ligase complex; when Cullin is neddylated, the interaction between the E2 and the SCF complex is strengthened. Interacts with DAPK3. Interacts with BRCA1; the DNA damage checkpoint promotes the association with BRCA1 after ionizing radiation. Interacts non-covalently with ubiquitin. Interacts with E3 ubiquitin-protein ligase CBLC. Interacts with UBTD1. Interacts with RIGI and RNF135; involved in RIGI ubiquitination and activation. Post-translationally, phosphorylated by AURKB.

It localises to the cell membrane. The protein localises to the endosome membrane. It carries out the reaction S-ubiquitinyl-[E1 ubiquitin-activating enzyme]-L-cysteine + [E2 ubiquitin-conjugating enzyme]-L-cysteine = [E1 ubiquitin-activating enzyme]-L-cysteine + S-ubiquitinyl-[E2 ubiquitin-conjugating enzyme]-L-cysteine.. The enzyme catalyses S-ubiquitinyl-[E1 ubiquitin-activating enzyme]-L-cysteine + [acceptor protein]-L-lysine = [E1 ubiquitin-activating enzyme]-L-cysteine + N(6)-monoubiquitinyl-[acceptor protein]-L-lysine.. It functions in the pathway protein modification; protein ubiquitination. In terms of biological role, accepts ubiquitin from the E1 complex and catalyzes its covalent attachment to other proteins. In vitro catalyzes 'Lys-11'-, as well as 'Lys-48'-linked polyubiquitination. Cooperates with the E2 CDC34 and the SCF(FBXW11) E3 ligase complex for the polyubiquitination of NFKBIA leading to its subsequent proteasomal degradation. Acts as an initiator E2, priming the phosphorylated NFKBIA target at positions 'Lys-21' and/or 'Lys-22' with a monoubiquitin. Ubiquitin chain elongation is then performed by CDC34, building ubiquitin chains from the UBE2D3-primed NFKBIA-linked ubiquitin. Also acts as an initiator E2, in conjunction with RNF8, for the priming of PCNA. Monoubiquitination of PCNA, and its subsequent polyubiquitination, are essential events in the operation of the DNA damage tolerance (DDT) pathway that is activated after DNA damage caused by UV or chemical agents during S-phase. Associates with the BRCA1/BARD1 E3 ligase complex to perform ubiquitination at DNA damage sites following ionizing radiation leading to DNA repair. Targets DAPK3 for ubiquitination which influences promyelocytic leukemia protein nuclear body (PML-NB) formation in the nucleus. In conjunction with the MDM2 and TOPORS E3 ligases, functions ubiquitination of p53/TP53. In conjunction with the CBL E3 ligase, targets EGFR for polyubiquitination at the plasma membrane as well as during its internalization and transport on endosomes. In conjunction with the STUB1 E3 quality control E3 ligase, ubiquitinates unfolded proteins to catalyze their immediate destruction. Together with RNF135, catalyzes the viral RNA-dependent 'Lys-63'-linked polyubiquitination of RIGI to activate the downstream signaling pathway that leads to interferon beta production. Together with ZNF598, catalyzes ubiquitination of 40S ribosomal proteins in response to ribosome collisions. In cooperation with the GATOR2 complex, catalyzes 'Lys-6'-linked ubiquitination of NPRL2. This is Ubiquitin-conjugating enzyme E2 D3 (UBE2D3) from Bos taurus (Bovine).